The following is a 275-amino-acid chain: Phosphite transport system permease protein PtxC (275 aa).

Helical transmembrane passes span L30 to L50, L88 to V108, L136 to A156, A221 to L241, and V249 to V269. The 184-residue stretch at L84 to S267 folds into the ABC transmembrane type-1 domain.

This sequence belongs to the binding-protein-dependent transport system permease family.

It localises to the cell inner membrane. Functionally, probably forms part of a binding-protein-dependent phosphite transporter. Probably responsible for the translocation of the substrate across the membrane. In Stutzerimonas stutzeri (Pseudomonas stutzeri), this protein is Phosphite transport system permease protein PtxC (ptxC).